The sequence spans 100 residues: Urease subunit gamma (100 aa).

The protein belongs to the urease gamma subunit family. Heterotrimer of UreA (gamma), UreB (beta) and UreC (alpha) subunits. Three heterotrimers associate to form the active enzyme.

Its subcellular location is the cytoplasm. The enzyme catalyses urea + 2 H2O + H(+) = hydrogencarbonate + 2 NH4(+). It functions in the pathway nitrogen metabolism; urea degradation; CO(2) and NH(3) from urea (urease route): step 1/1. The polypeptide is Urease subunit gamma (Prochlorococcus marinus (strain AS9601)).